The chain runs to 644 residues: Sodium/hydrogen exchanger 9 (644 aa).

Residues 1 to 20 (MERQRRFMSEKDEYQFQHQG) lie on the Lumenal side of the membrane. The helical transmembrane segment at 21–41 (AVELLVFNFLLILTILTIWLF) threads the bilayer. Over 42–45 (KNHR) the chain is Cytoplasmic. Residues 46–66 (FRFLHETGGAMVYGLIMGLIL) traverse the membrane as a helical segment. The Lumenal portion of the chain corresponds to 67–126 (RYATAPTDIESGTVYDCGKLAFSPSTLLINITDQVYEYKYKREISQHNINPHLGNAILEK). The helical transmembrane segment at 127–147 (MTFDPEIFFNVLLPPIIFHAG) threads the bilayer. Residues 148–164 (YSLKKRHFFQNLGSILT) are Cytoplasmic-facing. A helical membrane pass occupies residues 165 to 185 (YAFLGTAISCIVIGLIMYGFV). The Lumenal segment spans residues 186-203 (KAMVYAGQLKNGDFHFTD). A helical membrane pass occupies residues 204-224 (CLFFGSLMSATDPVTVLAIFH). The Cytoplasmic segment spans residues 225–235 (ELHVDPDLYTL). The helical transmembrane segment at 236-256 (LFGESVLNDAVAIVLTYSISI) threads the bilayer. Residues 257–277 (YSPKENPNAFDAAAFFQSVGN) are Lumenal-facing. Residues 278-298 (FLGIFAGSFAMGSAYAVVTAL) traverse the membrane as a helical segment. At 299-301 (LTK) the chain is on the cytoplasmic side. 2 helical membrane passes run 302–322 (FTKL…LSWS) and 323–343 (AFLS…FCGV). Over 344–364 (TQAHYTYNNLSLDSKMRTKQL) the chain is Cytoplasmic. The helical transmembrane segment at 365–385 (FEFMNFLAENVIFCYMGLALF) threads the bilayer. A topological domain (lumenal) is located at residue T386. A helical transmembrane segment spans residues 387–407 (FQNHIFNALFILGAFLAIFVA). Over 408–429 (RACNIYPLSFLLNLGRKHKIPW) the chain is Cytoplasmic. Residues 430–450 (NFQHMMMFSGLRGAIAFALAI) traverse the membrane as a helical segment. At 451–465 (RDTESQPKQMMFSTT) the chain is on the lumenal side. Residues 466-486 (LLLVFFTVWVFGGGTTPMLTW) form a helical membrane-spanning segment. The Cytoplasmic segment spans residues 487 to 644 (LQIRVGVDLD…EQTPGQSQLN (158 aa)). Positions 593–622 (QAASPCSPPTRLGLDQKAAPQTPGKENIYE) are disordered.

Belongs to the monovalent cation:proton antiporter 1 (CPA1) transporter (TC 2.A.36) family. In terms of assembly, homodimer; phosphatidylinositol-4,5-bisphosphate (PIP2) and phosphatidylinositol 3,4,5-trisphosphate (PIP3) could be involved in the dimer stabilization. Interacts (via the C-terminus) with RACK1. Interacts with CHP1.

The protein localises to the late endosome membrane. Its subcellular location is the early endosome membrane. The protein resides in the recycling endosome membrane. It localises to the cell membrane. It is found in the cytoplasmic vesicle. The protein localises to the phagosome membrane. It catalyses the reaction Na(+)(in) + H(+)(out) = Na(+)(out) + H(+)(in). It carries out the reaction K(+)(in) + H(+)(out) = K(+)(out) + H(+)(in). Its function is as follows. Endosomal Na(+), K(+)/H(+) antiporter. Mediates the electroneutral exchange of endosomal luminal H(+) for a cytosolic Na(+) or K(+). By facilitating proton efflux, SLC9A9 counteracts the acidity generated by vacuolar (V)-ATPase, thereby limiting luminal acidification. Regulates organellar pH and consequently, endosome maturation and endocytic trafficking of plasma membrane receptors and neurotransporters. Promotes the recycling of transferrin receptors back to the cell surface to facilitate additional iron uptake in the brain. Regulates synaptic transmission by regulating the luminal pH of axonal endosomes. Regulates phagosome lumenal pH, thus affecting phagosome maturation, and consequently, microbicidal activity in macrophages. Can also be active at the cell surface of specialized cells, e.g., in the inner ear hair bundles uses the high K(+) of the endolymph to regulate intracelular pH. The chain is Sodium/hydrogen exchanger 9 (SLC9A9) from Equus caballus (Horse).